The chain runs to 158 residues: Ribosome maturation factor RimP (158 aa).

The protein belongs to the RimP family.

It localises to the cytoplasm. Functionally, required for maturation of 30S ribosomal subunits. The chain is Ribosome maturation factor RimP from Pseudomonas fluorescens (strain Pf0-1).